Here is a 394-residue protein sequence, read N- to C-terminus: Putative serine protease HhoA (394 aa).

The first 24 residues, M1–G24, serve as a signal peptide directing secretion. Residues M293–D377 enclose the PDZ domain.

This sequence belongs to the peptidase S1C family.

The protein resides in the periplasm. Functionally, a putative protease, its function overlaps that of the related putative proteases HhoB and HtrA. The sequence is that of Putative serine protease HhoA (hhoA) from Synechocystis sp. (strain ATCC 27184 / PCC 6803 / Kazusa).